The primary structure comprises 220 residues: Fructose-6-phosphate aldolase 1 (220 aa).

The Schiff-base intermediate with substrate role is filled by Lys85.

The protein belongs to the transaldolase family. Type 3A subfamily. Homodecamer.

The protein localises to the cytoplasm. The enzyme catalyses beta-D-fructose 6-phosphate = dihydroxyacetone + D-glyceraldehyde 3-phosphate. In terms of biological role, catalyzes the reversible formation of fructose 6-phosphate from dihydroxyacetone and D-glyceraldehyde 3-phosphate via an aldolization reaction. In Escherichia coli O6:H1 (strain CFT073 / ATCC 700928 / UPEC), this protein is Fructose-6-phosphate aldolase 1 (fsaA).